Here is a 364-residue protein sequence, read N- to C-terminus: Autophagy-related protein 14 (364 aa).

Residues Cys-5–Cys-20 form a cysteine repeats region. A coiled-coil region spans residues Leu-38–Arg-114.

This sequence belongs to the ATG14 family. In terms of assembly, component of the autophagy-specific VPS34 PI3-kinase complex I composed of VPS15, VPS30, VPS34, ATG14 and ATG38. Interacts directly with ATG38.

Its subcellular location is the preautophagosomal structure membrane. The protein localises to the vacuole membrane. Required for cytoplasm to vacuole transport (Cvt) and autophagy as a part of the autophagy-specific VPS34 PI3-kinase complex I. This complex is essential to recruit the ATG8-phosphatidylinositol conjugate and the ATG12-ATG5 conjugate to the pre-autophagosomal structure. ATG14 mediates the specific binding of the VPS34 PI3-kinase complex I to the preautophagosomal structure (PAS). Required for survival and/or proliferation in kidneys and in brain. In Candida glabrata (strain ATCC 2001 / BCRC 20586 / JCM 3761 / NBRC 0622 / NRRL Y-65 / CBS 138) (Yeast), this protein is Autophagy-related protein 14.